Reading from the N-terminus, the 275-residue chain is Membrane protein insertase YidC (275 aa).

The first 22 residues, 1 to 22 (MKKYKRLLLMAGLVTLVFVLSA), serve as a signal peptide directing secretion. Cys23 carries the N-palmitoyl cysteine lipid modification. Cys23 is lipidated: S-diacylglycerol cysteine. The next 4 helical transmembrane spans lie at 53 to 73 (LGGS…IILL), 127 to 147 (YIGC…YQAI), 169 to 189 (YLIL…LSSM), and 206 to 226 (PAMI…YWVV). A compositionally biased stretch (basic and acidic residues) spans 249–266 (EEAARQAKARERALERAK). The tract at residues 249-275 (EEAARQAKARERALERAKSPKKKGKKK) is disordered.

It belongs to the OXA1/ALB3/YidC family. Type 2 subfamily.

It is found in the cell membrane. Required for the insertion and/or proper folding and/or complex formation of integral membrane proteins into the membrane. Involved in integration of membrane proteins that insert both dependently and independently of the Sec translocase complex, as well as at least some lipoproteins. The polypeptide is Membrane protein insertase YidC (Enterococcus faecalis (strain ATCC 700802 / V583)).